A 144-amino-acid chain; its full sequence is Ribosome maturation factor RimP (144 aa).

This sequence belongs to the RimP family.

It localises to the cytoplasm. Its function is as follows. Required for maturation of 30S ribosomal subunits. In Azoarcus sp. (strain BH72), this protein is Ribosome maturation factor RimP.